Consider the following 184-residue polypeptide: Ribosome-recycling factor (184 aa).

Belongs to the RRF family.

The protein resides in the cytoplasm. In terms of biological role, responsible for the release of ribosomes from messenger RNA at the termination of protein biosynthesis. May increase the efficiency of translation by recycling ribosomes from one round of translation to another. This chain is Ribosome-recycling factor, found in Agathobacter rectalis (strain ATCC 33656 / DSM 3377 / JCM 17463 / KCTC 5835 / VPI 0990) (Eubacterium rectale).